The sequence spans 142 residues: Small ribosomal subunit protein uS19 (142 aa).

An N-acetylserine modification is found at Ser-2. Glycyl lysine isopeptide (Lys-Gly) (interchain with G-Cter in ubiquitin) cross-links involve residues Lys-24, Lys-35, and Lys-64.

The protein belongs to the universal ribosomal protein uS19 family. As to quaternary structure, component of the small ribosomal subunit (SSU). Mature yeast ribosomes consist of a small (40S) and a large (60S) subunit. The 40S small subunit contains 1 molecule of ribosomal RNA (18S rRNA) and 33 different proteins (encoded by 57 genes). The large 60S subunit contains 3 rRNA molecules (25S, 5.8S and 5S rRNA) and 46 different proteins (encoded by 81 genes).

Its subcellular location is the cytoplasm. Functionally, component of the ribosome, a large ribonucleoprotein complex responsible for the synthesis of proteins in the cell. The small ribosomal subunit (SSU) binds messenger RNAs (mRNAs) and translates the encoded message by selecting cognate aminoacyl-transfer RNA (tRNA) molecules. The large subunit (LSU) contains the ribosomal catalytic site termed the peptidyl transferase center (PTC), which catalyzes the formation of peptide bonds, thereby polymerizing the amino acids delivered by tRNAs into a polypeptide chain. The nascent polypeptides leave the ribosome through a tunnel in the LSU and interact with protein factors that function in enzymatic processing, targeting, and the membrane insertion of nascent chains at the exit of the ribosomal tunnel. uS19 is involved in the nuclear export of the small ribosomal subunit precursor. Has a role in the late stage of the assembly of pre-40S particles within the nucleus and controls their export to the cytoplasm. This Saccharomyces cerevisiae (strain ATCC 204508 / S288c) (Baker's yeast) protein is Small ribosomal subunit protein uS19.